The following is a 436-amino-acid chain: Trigger factor (436 aa).

Residues 163–248 (GDTVVIDFDG…IHEVKEKQLP (86 aa)) form the PPIase FKBP-type domain.

Belongs to the FKBP-type PPIase family. Tig subfamily.

Its subcellular location is the cytoplasm. It catalyses the reaction [protein]-peptidylproline (omega=180) = [protein]-peptidylproline (omega=0). Involved in protein export. Acts as a chaperone by maintaining the newly synthesized protein in an open conformation. Functions as a peptidyl-prolyl cis-trans isomerase. This Levilactobacillus brevis (strain ATCC 367 / BCRC 12310 / CIP 105137 / JCM 1170 / LMG 11437 / NCIMB 947 / NCTC 947) (Lactobacillus brevis) protein is Trigger factor.